We begin with the raw amino-acid sequence, 63 residues long: Juvenile hormone esterase, isoform B (63 aa).

N-linked (GlcNAc...) asparagine glycosylation is present at Asn20.

It belongs to the type-B carboxylesterase/lipase family. In terms of tissue distribution, fat body, the site of their biosynthesis, and the hemolymph where it is secreted.

The enzyme catalyses juvenile hormone I + H2O = juvenile hormone I carboxylate + methanol + H(+). It carries out the reaction juvenile hormone III + H2O = juvenile hormone III carboxylate + methanol + H(+). In terms of biological role, JH esterase plays a crucial role in the decrease of JH activity in lepidopteran insects, by hydrolyzing the methyl ester of JH. It is also involved in the transport of JH. In Trichoplusia ni (Cabbage looper), this protein is Juvenile hormone esterase, isoform B.